The sequence spans 215 residues: 2-dehydro-3-deoxy-phosphogluconate aldolase (215 aa).

Residue glutamate 46 is the Proton acceptor of the active site. Pyruvate contacts are provided by arginine 50, threonine 74, and lysine 134. The Schiff-base intermediate with substrate role is filled by lysine 134.

It belongs to the KHG/KDPG aldolase family. As to quaternary structure, homotrimer.

The catalysed reaction is 2-dehydro-3-deoxy-6-phospho-D-gluconate = D-glyceraldehyde 3-phosphate + pyruvate. It participates in carbohydrate acid metabolism; 2-dehydro-3-deoxy-D-gluconate degradation; D-glyceraldehyde 3-phosphate and pyruvate from 2-dehydro-3-deoxy-D-gluconate: step 2/2. Its function is as follows. Involved in the degradation of glucose via the Entner-Doudoroff pathway. Catalyzes the reversible, stereospecific retro-aldol cleavage of 2-keto-3-deoxy-6-phosphogluconate (KDPG) to pyruvate and D-glyceraldehyde-3-phosphate. Involved in the degradation of 3,6-anhydro-L-galactose (L-AnG), which is the major monomeric sugar of red macroalgae. The cleavage of KDPG to glyceraldehyde 3-phosphate and pyruvate is the sixth step of this pathway. The protein is 2-dehydro-3-deoxy-phosphogluconate aldolase of Pseudoalteromonas atlantica (strain T6c / ATCC BAA-1087).